The chain runs to 229 residues: MADDFGFFSSSESGAPEAAEEDPAAAFLAQQESEIAGIENDEGFGAPAGSHAAPAQPGPTSGAGSEDMGTTVNGDVFQEANGPADGYAAIAQADRLTQEPESIRKWREEQRKRLQELDAASKVTEQEWREKAKKDLEEWNQRQSEQVEKNKINNRIADKAFYQQPDADIIGYVASEEAFVKESKEETPGTEWEKVAQLCDFNPKSSKQCKDVSRLRSVLMSLKQTPLSR.

A compositionally biased stretch (low complexity) spans 1–17 (MADDFGFFSSSESGAPE). Residues 1–82 (MADDFGFFSS…NGDVFQEANG (82 aa)) are disordered. Residues serine 11 and serine 13 each carry the phosphoserine modification. Residues 58 to 73 (GPTSGAGSEDMGTTVN) show a composition bias toward polar residues. The interval 93 to 155 (ADRLTQEPES…QVEKNKINNR (63 aa)) is involved in binding clathrin heavy chain. A Phosphothreonine modification is found at threonine 187. A disulfide bridge connects residues cysteine 199 and cysteine 209. At lysine 204 the chain carries N6-acetyllysine. Serine 217 bears the Phosphoserine mark.

It belongs to the clathrin light chain family. Clathrin coats are formed from molecules containing 3 heavy chains and 3 light chains. Interacts (via N-terminus) with HIP1. Interacts with HIP1R.

It localises to the cytoplasmic vesicle membrane. The protein localises to the membrane. It is found in the coated pit. Clathrin is the major protein of the polyhedral coat of coated pits and vesicles. The sequence is that of Clathrin light chain B (CLTB) from Homo sapiens (Human).